A 710-amino-acid polypeptide reads, in one-letter code: E3 ubiquitin-protein ligase TRIM9 (710 aa).

The segment at 10–50 (CPVCGSFYREPIILPCSHNLCQACARNILVQTPESESPQSH) adopts an RING-type zinc-finger fold. A Phosphothreonine modification is found at Thr-41. Phosphoserine is present on residues Ser-44, Ser-46, and Ser-49. B box-type zinc fingers lie at residues 163–212 (AAAL…LVPP) and 224–266 (RKVS…VKAL). Residues Cys-168, Cys-171, Cys-193, His-198, Cys-229, His-232, Cys-252, and His-258 each contribute to the Zn(2+) site. The stretch at 273–340 (HKSQLSQALN…KAQLLARVNK (68 aa)) forms a coiled coil. The COS domain occupies 374-432 (IKENDPSGFLQISDALIRRVHLTEDQWGKGTLTPRMTTDFDLSLDNSPLLQSIHQLDFV). Residues 440 to 535 (VPATPILQLE…KTLVLQTSEV (96 aa)) form the Fibronectin type-III domain. Residues 533-702 (SEVAWFAFDP…LHTGLPVPDF (170 aa)) form the B30.2/SPRY domain.

This sequence belongs to the TRIM/RBCC family. As to quaternary structure, interacts with SNAP25. Auto-ubiquitinated. Poly-ubiquitinated in cultured cells, whereas it is monoubiquitinated in vitro. In terms of tissue distribution, brain. Highly expressed in the cerebral cortex (at protein level). Severely decreased in the affected brain areas in Parkinson disease and dementia with Lewy bodies.

It localises to the cytoplasm. It is found in the cell projection. The protein localises to the dendrite. Its subcellular location is the cytoplasmic vesicle. The protein resides in the secretory vesicle. It localises to the synaptic vesicle. It is found in the synapse. The protein localises to the cytoskeleton. The catalysed reaction is S-ubiquitinyl-[E2 ubiquitin-conjugating enzyme]-L-cysteine + [acceptor protein]-L-lysine = [E2 ubiquitin-conjugating enzyme]-L-cysteine + N(6)-ubiquitinyl-[acceptor protein]-L-lysine.. Its pathway is protein modification; protein ubiquitination. Its function is as follows. E3 ubiquitin-protein ligase which ubiquitinates itself in cooperation with an E2 enzyme UBE2D2/UBC4 and serves as a targeting signal for proteasomal degradation. May play a role in regulation of neuronal functions and may also participate in the formation or breakdown of abnormal inclusions in neurodegenerative disorders. May act as a regulator of synaptic vesicle exocytosis by controlling the availability of SNAP25 for the SNARE complex formation. This chain is E3 ubiquitin-protein ligase TRIM9 (TRIM9), found in Homo sapiens (Human).